The following is a 365-amino-acid chain: tRNA-specific 2-thiouridylase MnmA (365 aa).

Residues 14-21 (AMSGGVDS) and Leu-40 each bind ATP. Catalysis depends on Cys-108, which acts as the Nucleophile. A disulfide bond links Cys-108 and Cys-204. Gly-132 contacts ATP. The tract at residues 154 to 156 (KDQ) is interaction with tRNA. The active-site Cysteine persulfide intermediate is the Cys-204.

This sequence belongs to the MnmA/TRMU family.

It localises to the cytoplasm. It carries out the reaction S-sulfanyl-L-cysteinyl-[protein] + uridine(34) in tRNA + AH2 + ATP = 2-thiouridine(34) in tRNA + L-cysteinyl-[protein] + A + AMP + diphosphate + H(+). Functionally, catalyzes the 2-thiolation of uridine at the wobble position (U34) of tRNA, leading to the formation of s(2)U34. This is tRNA-specific 2-thiouridylase MnmA from Rickettsia rickettsii (strain Iowa).